A 122-amino-acid chain; its full sequence is Large ribosomal subunit protein bL12 (122 aa).

The protein belongs to the bacterial ribosomal protein bL12 family. In terms of assembly, homodimer. Part of the ribosomal stalk of the 50S ribosomal subunit. Forms a multimeric L10(L12)X complex, where L10 forms an elongated spine to which 2 to 4 L12 dimers bind in a sequential fashion. Binds GTP-bound translation factors.

Forms part of the ribosomal stalk which helps the ribosome interact with GTP-bound translation factors. Is thus essential for accurate translation. The protein is Large ribosomal subunit protein bL12 of Streptococcus thermophilus (strain ATCC BAA-491 / LMD-9).